A 388-amino-acid polypeptide reads, in one-letter code: Pre-mRNA-splicing factor cwf2 (388 aa).

A disordered region spans residues valine 43–glutamate 63. A C3H1-type zinc finger spans residues asparagine 111–proline 138. The 75-residue stretch at tyrosine 174–threonine 248 folds into the RRM domain. The interval proline 331–serine 352 is disordered.

This sequence belongs to the RRM CWC2 family. Belongs to the 40S cdc5-associated complex (or cwf complex), a spliceosome sub-complex reminiscent of a late-stage spliceosome composed of the U2, U5 and U6 snRNAs and at least brr2, cdc5, cwf2/prp3, cwf3/syf1, cwf4/syf3, cwf5/ecm2, spp42/cwf6, cwf7/spf27, cwf8, cwf9, cwf10, cwf11, cwf12, prp45/cwf13, cwf14, cwf15, cwf16, cwf17, cwf18, cwf19, cwf20, cwf21, cwf22, cwf23, cwf24, cwf25, cwf26, cyp7/cwf27, cwf28, cwf29/ist3, lea1, msl1, prp5/cwf1, prp10, prp12/sap130, prp17, prp22, sap61, sap62, sap114, sap145, slu7, smb1, smd1, smd3, smf1, smg1 and syf2.

The protein localises to the nucleus. Involved in the first step of pre-mRNA splicing. Required for cell growth and cell cycle control. Plays a role in the levels of the U1, U4, U5 and U6 snRNAs and the maintenance of the U4/U6 snRNA complex. May provide the link between the 'nineteen complex' NTC spliceosome protein complex and the spliceosome through the U6 snRNA. Associates predominantly with U6 snRNAs in assembled active spliceosomes. Binds directly to the internal stem-loop (ISL) domain of the U6 snRNA and to the pre-mRNA intron near the 5' splice site during the activation and catalytic phases of the spliceosome cycle. Involved in pre-mRNA splicing. The chain is Pre-mRNA-splicing factor cwf2 (cwf2) from Schizosaccharomyces pombe (strain 972 / ATCC 24843) (Fission yeast).